A 257-amino-acid polypeptide reads, in one-letter code: Hydroxyacylglutathione hydrolase (257 aa).

Residues histidine 54, histidine 56, aspartate 58, histidine 59, histidine 113, aspartate 137, and histidine 175 each contribute to the Zn(2+) site.

Belongs to the metallo-beta-lactamase superfamily. Glyoxalase II family. Monomer. Zn(2+) is required as a cofactor.

It catalyses the reaction an S-(2-hydroxyacyl)glutathione + H2O = a 2-hydroxy carboxylate + glutathione + H(+). It functions in the pathway secondary metabolite metabolism; methylglyoxal degradation; (R)-lactate from methylglyoxal: step 2/2. In terms of biological role, thiolesterase that catalyzes the hydrolysis of S-D-lactoyl-glutathione to form glutathione and D-lactic acid. The polypeptide is Hydroxyacylglutathione hydrolase (Trichodesmium erythraeum (strain IMS101)).